We begin with the raw amino-acid sequence, 480 residues long: Protein DETOXIFICATION 15 (480 aa).

12 helical membrane passes run 36–56 (GPLI…VMFV), 69–89 (IATS…ASAM), 118–138 (LLSV…VFFG), 143–163 (IAHL…AYGL), 180–200 (VVIC…VLVL), 208–228 (GAAV…SCYV), 255–275 (LVIP…ELLV), 294–314 (VWMI…NELG), 326–346 (RVVL…LILI), 360–380 (VVSH…LDSF), 396–416 (IGAF…GLLL), and 428–448 (WLGI…ITFF).

The protein belongs to the multi antimicrobial extrusion (MATE) (TC 2.A.66.1) family.

It is found in the membrane. This is Protein DETOXIFICATION 15 from Arabidopsis thaliana (Mouse-ear cress).